An 804-amino-acid chain; its full sequence is Protein-lysine N-methyltransferase SMYD4 (804 aa).

112–114 serves as a coordination point for S-adenosyl-L-methionine; it reads RSA. An SET domain is found at 233–574; the sequence is SSVGLCIDPL…KGQEILHCYG (342 aa). Zn(2+) is bound by residues Cys-296, Cys-299, Cys-309, Cys-312, Cys-318, Cys-322, His-331, and Cys-335. An MYND-type zinc finger spans residues 296 to 335; the sequence is CHRCLKHTLATVPCDGCSYAKYCSQECLQQAWELYHRTEC. Residues Asn-427, 539–540, Tyr-573, and Phe-595 each bind S-adenosyl-L-methionine; that span reads NH.

Belongs to the class V-like SAM-binding methyltransferase superfamily. Interacts (via MYND-type zinc finger) with HDAC1.

It localises to the nucleus. It is found in the cytoplasm. It catalyses the reaction L-lysyl-[protein] + S-adenosyl-L-methionine = N(6)-methyl-L-lysyl-[protein] + S-adenosyl-L-homocysteine + H(+). Protein-lysine N-methyltransferase. Monomethylates PRMT5, modulating its transcriptional activity. May also act as a histone methyltransferase. Plays a critical role in cardiac development. Acts as a key epigenetic regulator of gene expression during cardiac development via its dual activities as a methyltransferase and negative regulator of HDAC1. This is Protein-lysine N-methyltransferase SMYD4 (SMYD4) from Pongo abelii (Sumatran orangutan).